Consider the following 337-residue polypeptide: GTP 3',8-cyclase (337 aa).

In terms of domain architecture, Radical SAM core spans 17 to 242; that stretch reads TFQREYYYLR…RQKDRTDGPA (226 aa). R26 contacts GTP. Residues C33 and C37 each contribute to the [4Fe-4S] cluster site. Residue Y39 coordinates S-adenosyl-L-methionine. C40 provides a ligand contact to [4Fe-4S] cluster. R76 contributes to the GTP binding site. Residue G80 coordinates S-adenosyl-L-methionine. Position 107 (T107) interacts with GTP. Residue S131 coordinates S-adenosyl-L-methionine. Position 168 (K168) interacts with GTP. M202 lines the S-adenosyl-L-methionine pocket. C265 and C268 together coordinate [4Fe-4S] cluster. 270–272 serves as a coordination point for GTP; that stretch reads RLR. C282 provides a ligand contact to [4Fe-4S] cluster.

Belongs to the radical SAM superfamily. MoaA family. In terms of assembly, monomer and homodimer. Requires [4Fe-4S] cluster as cofactor.

It catalyses the reaction GTP + AH2 + S-adenosyl-L-methionine = (8S)-3',8-cyclo-7,8-dihydroguanosine 5'-triphosphate + 5'-deoxyadenosine + L-methionine + A + H(+). Its pathway is cofactor biosynthesis; molybdopterin biosynthesis. Its function is as follows. Catalyzes the cyclization of GTP to (8S)-3',8-cyclo-7,8-dihydroguanosine 5'-triphosphate. In Mannheimia succiniciproducens (strain KCTC 0769BP / MBEL55E), this protein is GTP 3',8-cyclase.